Here is a 305-residue protein sequence, read N- to C-terminus: tRNA pseudouridine synthase B (305 aa).

Catalysis depends on aspartate 48, which acts as the Nucleophile.

The protein belongs to the pseudouridine synthase TruB family. Type 1 subfamily.

It catalyses the reaction uridine(55) in tRNA = pseudouridine(55) in tRNA. In terms of biological role, responsible for synthesis of pseudouridine from uracil-55 in the psi GC loop of transfer RNAs. This Pseudomonas syringae pv. syringae (strain B728a) protein is tRNA pseudouridine synthase B.